The chain runs to 494 residues: Sugiol synthase (494 aa).

A helical membrane pass occupies residues 3 to 23 (SFSLLAALFFISAATWFISSR). Residue cysteine 437 participates in heme binding.

The protein belongs to the cytochrome P450 family. Heme is required as a cofactor. In terms of tissue distribution, expressed in roots.

It is found in the membrane. The catalysed reaction is ferruginol + 2 reduced [NADPH--hemoprotein reductase] + 2 O2 = sugiol + 2 oxidized [NADPH--hemoprotein reductase] + 3 H2O + 2 H(+). It catalyses the reaction ferruginol + reduced [NADPH--hemoprotein reductase] + O2 = 11-hydroxyferruginol + oxidized [NADPH--hemoprotein reductase] + H2O + H(+). It carries out the reaction 11-hydroxyferruginol + 2 reduced [NADPH--hemoprotein reductase] + 2 O2 = 11-hydroxysugiol + 2 oxidized [NADPH--hemoprotein reductase] + 3 H2O + 2 H(+). It participates in secondary metabolite biosynthesis; terpenoid biosynthesis. Its function is as follows. Monooxygenase that oxidizes ferruginol to produce sugiol. Oxidizes ferruginol at C-12 to produce 11-hydroxyferruginol. Can oxidize 11-hydroxyferruginol to 11-hydroxysugiol. These products are intermediates in tanshinone biosynthesis. This Salvia miltiorrhiza (Chinese sage) protein is Sugiol synthase.